A 394-amino-acid polypeptide reads, in one-letter code: NAD(P)H-quinone oxidoreductase subunit H (394 aa).

This sequence belongs to the complex I 49 kDa subunit family. In terms of assembly, NDH-1 can be composed of about 15 different subunits; different subcomplexes with different compositions have been identified which probably have different functions.

It is found in the cellular thylakoid membrane. It carries out the reaction a plastoquinone + NADH + (n+1) H(+)(in) = a plastoquinol + NAD(+) + n H(+)(out). It catalyses the reaction a plastoquinone + NADPH + (n+1) H(+)(in) = a plastoquinol + NADP(+) + n H(+)(out). NDH-1 shuttles electrons from an unknown electron donor, via FMN and iron-sulfur (Fe-S) centers, to quinones in the respiratory and/or the photosynthetic chain. The immediate electron acceptor for the enzyme in this species is believed to be plastoquinone. Couples the redox reaction to proton translocation, and thus conserves the redox energy in a proton gradient. Cyanobacterial NDH-1 also plays a role in inorganic carbon-concentration. This Parasynechococcus marenigrum (strain WH8102) protein is NAD(P)H-quinone oxidoreductase subunit H.